We begin with the raw amino-acid sequence, 112 residues long: DIVITQDELSNPVTSGESVSISCRSSKSLLYKDGKTYLNWFLQRPGQSPQLLISLMSTRASGVSDRFSGSGSRTDFTLEISRVKAEDVGVYYCQQLVEYPLTFGAGTKLELK.

Positions 1–23 (DIVITQDELSNPVTSGESVSISC) are framework-1. A disulfide bridge connects residues C23 and C93. A complementarity-determining-1 region spans residues 24-39 (RSSKSLLYKDGKTYLN). Residues 40-54 (WFLQRPGQSPQLLIS) form a framework-2 region. The interval 55–61 (LMSTRAS) is complementarity-determining-2. Residues 62-93 (GVSDRFSGSGSRTDFTLEISRVKAEDVGVYYC) are framework-3. Positions 94 to 102 (QQLVEYPLT) are complementarity-determining-3. The segment at 103–112 (FGAGTKLELK) is framework-4.

The chain is Ig kappa chain V-II region MOPC 167 from Mus musculus (Mouse).